An 896-amino-acid chain; its full sequence is Alanine--tRNA ligase (896 aa).

Residues His-581, His-585, Cys-684, and His-688 each contribute to the Zn(2+) site.

The protein belongs to the class-II aminoacyl-tRNA synthetase family. Zn(2+) serves as cofactor.

Its subcellular location is the cytoplasm. It carries out the reaction tRNA(Ala) + L-alanine + ATP = L-alanyl-tRNA(Ala) + AMP + diphosphate. Catalyzes the attachment of alanine to tRNA(Ala) in a two-step reaction: alanine is first activated by ATP to form Ala-AMP and then transferred to the acceptor end of tRNA(Ala). Also edits incorrectly charged Ser-tRNA(Ala) and Gly-tRNA(Ala) via its editing domain. This chain is Alanine--tRNA ligase, found in Renibacterium salmoninarum (strain ATCC 33209 / DSM 20767 / JCM 11484 / NBRC 15589 / NCIMB 2235).